The primary structure comprises 411 residues: Translation initiation factor 2 subunit gamma (411 aa).

The region spanning Q9–K201 is the tr-type G domain. The tract at residues G18–S25 is G1. D21, S25, G46, and S48 together coordinate Mg(2+). Residue D21 to T26 coordinates GTP. Residues G46 to K50 are G2. The G3 stretch occupies residues D88 to G91. GTP-binding positions include N144 to D147 and S179 to Y181. The tract at residues N144–D147 is G4. The segment at S179–Y181 is G5.

Belongs to the TRAFAC class translation factor GTPase superfamily. Classic translation factor GTPase family. EIF2G subfamily. As to quaternary structure, heterotrimer composed of an alpha, a beta and a gamma chain. Mg(2+) is required as a cofactor.

The enzyme catalyses GTP + H2O = GDP + phosphate + H(+). In terms of biological role, eIF-2 functions in the early steps of protein synthesis by forming a ternary complex with GTP and initiator tRNA. The protein is Translation initiation factor 2 subunit gamma of Thermoplasma acidophilum (strain ATCC 25905 / DSM 1728 / JCM 9062 / NBRC 15155 / AMRC-C165).